The following is a 70-amino-acid chain: ATP synthase subunit c (70 aa).

2 helical membrane-spanning segments follow: residues 4 to 24 (IAAG…DGIV) and 47 to 67 (FIGV…SLLV).

Belongs to the ATPase C chain family. F-type ATPases have 2 components, F(1) - the catalytic core - and F(0) - the membrane proton channel. F(1) has five subunits: alpha(3), beta(3), gamma(1), delta(1), epsilon(1). F(0) has three main subunits: a(1), b(2) and c(10-14). The alpha and beta chains form an alternating ring which encloses part of the gamma chain. F(1) is attached to F(0) by a central stalk formed by the gamma and epsilon chains, while a peripheral stalk is formed by the delta and b chains.

It is found in the cell membrane. F(1)F(0) ATP synthase produces ATP from ADP in the presence of a proton or sodium gradient. F-type ATPases consist of two structural domains, F(1) containing the extramembraneous catalytic core and F(0) containing the membrane proton channel, linked together by a central stalk and a peripheral stalk. During catalysis, ATP synthesis in the catalytic domain of F(1) is coupled via a rotary mechanism of the central stalk subunits to proton translocation. Functionally, key component of the F(0) channel; it plays a direct role in translocation across the membrane. A homomeric c-ring of between 10-14 subunits forms the central stalk rotor element with the F(1) delta and epsilon subunits. This is ATP synthase subunit c from Pediococcus pentosaceus (strain ATCC 25745 / CCUG 21536 / LMG 10740 / 183-1w).